Consider the following 294-residue polypeptide: DNA adenine methyltransferase YhdJ (294 aa).

Residues T275 to K294 form a disordered region. Residues R283–K294 show a composition bias toward basic and acidic residues.

This sequence belongs to the N(4)/N(6)-methyltransferase family.

The catalysed reaction is a 2'-deoxyadenosine in DNA + S-adenosyl-L-methionine = an N(6)-methyl-2'-deoxyadenosine in DNA + S-adenosyl-L-homocysteine + H(+). Functionally, a beta subtype methylase, recognizes the double-stranded sequence 5'-ATGCAT-3' and methylates A-5. This Escherichia coli (strain K12) protein is DNA adenine methyltransferase YhdJ (yhdJ).